Here is a 247-residue protein sequence, read N- to C-terminus: ATP synthase subunit a, chloroplastic (247 aa).

The next 5 helical transmembrane spans lie at 36–56 (GQVLMTSWFVFAVIAILSIAG), 95–115 (IPFLGTLFLFIFVSNWSGALI), 134–154 (INTTVALALLTSTAYFYAGFS), 199–219 (LVVGVLVALVPLVVPIPIMLL), and 220–240 (GLFTSGIQALVFATLAGAYIG).

The protein belongs to the ATPase A chain family. In terms of assembly, F-type ATPases have 2 components, CF(1) - the catalytic core - and CF(0) - the membrane proton channel. CF(1) has five subunits: alpha(3), beta(3), gamma(1), delta(1), epsilon(1). CF(0) has four main subunits: a, b, b' and c.

The protein localises to the plastid. The protein resides in the chloroplast thylakoid membrane. Functionally, key component of the proton channel; it plays a direct role in the translocation of protons across the membrane. This is ATP synthase subunit a, chloroplastic from Tupiella akineta (Green alga).